The sequence spans 75 residues: Neuropeptide-like protein 31 (75 aa).

An N-terminal signal peptide occupies residues 1–22; it reads MISTSSILVLVVLLACFMAANA. Residues Tyr-29, Tyr-39, Tyr-49, Tyr-56, and Tyr-64 each carry the tyrosine amide modification. Tryptophan amide is present on Trp-73.

It belongs to the YARP (YGGW-amide related peptide) family. Expressed in hypoderm.

Its subcellular location is the secreted. Functionally, antimicrobial peptides that have antifungal activity against D.coniospora. Has weak antibacterial activity against Gram-positive bacteria M.luteus and Gram-negative E.coli. This Caenorhabditis elegans protein is Neuropeptide-like protein 31 (nlp-31).